The sequence spans 314 residues: tRNA-cytidine(32) 2-sulfurtransferase (314 aa).

Positions 58-63 (SGGKDS) match the PP-loop motif motif. C133, C136, and C224 together coordinate [4Fe-4S] cluster.

This sequence belongs to the TtcA family. In terms of assembly, homodimer. Mg(2+) is required as a cofactor. Requires [4Fe-4S] cluster as cofactor.

It is found in the cytoplasm. The catalysed reaction is cytidine(32) in tRNA + S-sulfanyl-L-cysteinyl-[cysteine desulfurase] + AH2 + ATP = 2-thiocytidine(32) in tRNA + L-cysteinyl-[cysteine desulfurase] + A + AMP + diphosphate + H(+). It participates in tRNA modification. Functionally, catalyzes the ATP-dependent 2-thiolation of cytidine in position 32 of tRNA, to form 2-thiocytidine (s(2)C32). The sulfur atoms are provided by the cysteine/cysteine desulfurase (IscS) system. The polypeptide is tRNA-cytidine(32) 2-sulfurtransferase (Polaromonas naphthalenivorans (strain CJ2)).